A 63-amino-acid chain; its full sequence is Hyphancin-3F (63 aa).

Positions 1–22 are cleaved as a signal peptide; the sequence is MNFSRILFFVFACFVALASVSA. Positions 23 to 26 are cleaved as a propeptide — removed by a dipeptidylpeptidase; it reads APEP. L61 bears the Leucine amide mark.

This sequence belongs to the cecropin family.

Its subcellular location is the secreted. In terms of biological role, has antibacterial activity. The polypeptide is Hyphancin-3F (Hyphantria cunea (Fall webworm moth)).